The following is a 2457-amino-acid chain: MTPLREPIAVIGSACRFPGGANSPHKLWELLRDPRDILREFPDDRLVLSKFYNGNANHHGSTNVRNRSYLLSEDIRAFDAPFFHINPREADGMDPAQRILLEAVYEALEAAGYTMEQMQGTHTSVFVGVMNSDWWDLQMRDTETIATHAATGTARSIVSNRISYVFDLKGVSMTIDTACSSSLVALHQAVQSLRSGESTAAIVGGANILLDPAMYIAESTLQMLSPESRSRMWDKSANGYARGEGCAAVFLKPLTRAIADGDHIECVIRETGVSSDGRTQGITMPSAAAQAALIKSTYRSAGLDPLADRCQYFECHGTGTPAGDPIEAQAIAEAFFSHSGEDAEIYVGSIKTVIGHLEGCAGLAGLLKASLAIQNRTIPANMLFNDLNPLIGPYYRNLKILQAAKPWPQDIHGPRRASVNSFGFGGTNAHVILESYEPEMQGTHVLQERSFHGPLTFSACSKSSLLATISNFTSYIKTNPAVDLQNLAWVLQRKRTEFPVKQHFSGSTHARLIESMEAYLQNAGSSGLHNTTIDTKLLYPSEIPRVLGIFTGQGAQWATMGKEFIQNSYLFRESIDRSEAALVALPDPPSWSLISELFATVETSRLNEAELSQPLCTAIQIAIVDLMFAAGVKLDAVVGHSSGEIAAAYASGIISAADAMAIAYYRGFHAKRSHGTGGKRGGMVAAELSYEAALQFCEKVEWAGRLVLAASNSPSSITLSGDLDAVQEAHAYFEKENIFSRLLRVDTAYHSHHMIPCAEPYLTSLKACNIQVSQARSDCIWISSVSGDVQSSSEEQGALTGEYWVDNMVKPVLFSQAVQCSIWNSGPFESIVEIGPHFALKGPTTQVMEAVLESSPPYLSFMRRGHGIETFSDGLGRLWSKLGPSSVDLTGYWKACSSSHIKFQMLKGLPAYAWDHDKVYWKEGRISRNHRLRKDVPHELLGRRTADDSDYELRWRNVLRLTEIPWIRGHKFQGQVLFPAAGYVTMALEASKALVGDRHVRLFELRDICIRKALVLEEDQSSLETVFSVKRLNADFGIHDENMDLLEAEFSCYVCADETVGTLEKTVSGRIIIHLGSGVDVKLPPAAHFCTDLSPVDLDRFYSTVEELGLSYQGLFKGLDHAERMLNHSHALAVWENHSMGAGSMVHPALLDVMFQAIFVASISPAAPSTLWTPYLPVSIDRIIVDPDHIPVYSHPEVRAHIQAYVTKSSASSIVGDIHLLDSNGIHNGIQVEGLSLKSVAEPTEENDRSIFSQTVWDTDIASGTDFLRDRKEDAQESKLIHAIERVALFHFRSLVEAITVEKAKTLAWHHQLFLKAVKANIETIRTGGNPVVRQEWLCDTRETIEDLRAQHPGQIDLNLMHAVSEKLISIVCGETQILEVMLQDDMLNDFYMRGRGFETMNNCIARAVQQIAHKHPRAKYLEIGAGTGGTTHRILDTIESAYTSYEYTDISSAFFEKASHKFDKHASKMVFKVLDIEKDVVDQGFENGAYDVVIAANVLHATRTLSGTMGHIRSLLKPGGYLIFMEVTGDQLRLLFLFGALPGWWLGAGEGRSLGPGVSTIAWDNILRNTGFSGVDDVFYDFPDRSRHTCSVMISQAVDDQLRLLRDPLAATGMPISEQVLIIGGDTSSVSQLAYDTKRLISPWASCVAINNIDGLDSRRLPSRFSVICLTELDKPLFSEIMSEQRLSNLQNLFATANVVFWITSGCNEGTPVANMMVGIGRALATELPHLTLQFLDVKTVERLKPSIVAQSFFRLVLAKPLVMAEKSMLWTTEPELVFDGDDILIPRVLPDKEMNNRFNAARRPISENLWKESTCIELSNADNSSAPALFEIKNTIRPGETTIDVKYSVCLGKRCTFVLGVVSGTSDTVLAISDTNASSVRISKEHVFFLPHDFSGNSATLLLDTANHVLAAKLLRCISPNSIALIYEPGVRLAAAIRHHAHENTVDVFPATSNREKCGEGWAFIHPHATERDIRTIIPRNTGCFINLSFKPPGALSRALLQQTIIHGPDCLSQIVSSADGFLLEAAFNWATTGLLSLDSVETVSVQSYVGTTRPSRDFPLVFDWTAPRLPVTVKPLEPKGLFLPDKTYLMIGMTGDLGRSLCRWMAEHGARYVVLTSRNAEVDSAWIESMAAIGATVKVYKMDVSNRKSVLGVYTTIKNSLPTIAGVCNAAMVLEDRLFANMTVGALSKVFEPKVEGSKVLDEIFHELNLDFFILFSSLTSILGNGGQSNYHAANLFMTSMCAQRRARGLAASVMHIGMVADIGYVARSDRHIENHLRKLQYHPMSETDMHYLFAEAVMSSRADHPGNWNIVSGIETFVDAPGVKLRPPHYHNPRFAHYVREENARKEDLRTDKTEKSVKELLEDAISEEDVTTVFQQAFLIKLERLTQLESHRIDANKSLLNLGVDSLSAVEIRNWFLQTVGVDIPVLKLLRGDTVSEISIDATKKYLAQRTS.

The 431-residue stretch at 5-435 (REPIAVIGSA…GTNAHVILES (431 aa)) folds into the Ketosynthase family 3 (KS3) domain. Active-site for beta-ketoacyl synthase activity residues include cysteine 179, histidine 316, and histidine 356. A malonyl-CoA:ACP transacylase (MAT) domain region spans residues 545-856 (RVLGIFTGQG…VMEAVLESSP (312 aa)). The active-site For malonyltransferase activity is serine 641. Positions 938 to 1078 (HELLGRRTAD…GRIIIHLGSG (141 aa)) are N-terminal hotdog fold. The segment at 938–1244 (HELLGRRTAD…LSLKSVAEPT (307 aa)) is dehydratase (DH) domain. The 309-residue stretch at 938–1246 (HELLGRRTAD…LKSVAEPTEE (309 aa)) folds into the PKS/mFAS DH domain. Catalysis depends on histidine 970, which acts as the Proton acceptor; for dehydratase activity. Residues 1091 to 1246 (TDLSPVDLDR…LKSVAEPTEE (156 aa)) form a C-terminal hotdog fold region. Aspartate 1152 acts as the Proton donor; for dehydratase activity in catalysis. Residues 1399-1587 (ETMNNCIARA…DVFYDFPDRS (189 aa)) are methyltransferase (CMet) domain. The tract at residues 2085–2281 (FLPDKTYLMI…SDRHIENHLR (197 aa)) is ketoreductase (KR) domain. Positions 2374–2451 (DVTTVFQQAF…EISIDATKKY (78 aa)) constitute a Carrier domain. Serine 2411 bears the O-(pantetheine 4'-phosphoryl)serine mark.

Pantetheine 4'-phosphate is required as a cofactor.

It participates in mycotoxin biosynthesis. Highly reducing polyketide synthase; part of the gene clusters that mediate the biosynthesis of the host-selective toxins (HSTs) ACT-toxins responsible for brown spot of tangerine disease by the tangerine pathotype which affects tangerines and mandarins. ACT-toxins consist of three moieties, 9,10-epoxy-8-hydroxy-9-methyl-decatrienoic acid (EDA), valine and a polyketide. ACT-toxin I is toxic to both citrus and pear; toxin II the 5''-deoxy derivative of ACT-toxin I, is highly toxic to pear and slightly toxic to citrus. On cellular level, ACT-toxins affect plasma membrane of susceptible cells and cause a sudden increase in loss of K(+) after a few minutes of toxin treatment. The acyl-CoA ligase ACTT1, the hydrolase ACTT2, the enoyl-CoA hydratases ACTT3 and ACTT6, and the acyl-CoA synthetase ACTT5 are all involved in the biosynthesis of the AK-, AF- and ACT-toxin common 9,10-epoxy-8-hydroxy-9-methyl-decatrienoic acid (EDA) structural moiety. The exact role of each enzyme, and of additional enzymes identified within the AF-toxin clusters have still to be determined. On the other hand, ACTTS1 to ACTTS4 are specific to the tangerine pathotype. The function of ACTTS3 is to elongate the polyketide chain portion of ACT-toxin that is unique to this toxin. The enoyl-reductase ACTTS2 might complement the missing enoyl-reductase (ER) domain in ACTTS3 in the synthesis of the polyketide portion of ACT-toxin. The roles of the nonribosomal peptide synthetases-related proteins ACTTS1 and ACTTS4 have also still not been elucidated. This Alternaria alternata (Alternaria rot fungus) protein is Highly reducing polyketide synthase ACTTS3.